Here is a 142-residue protein sequence, read N- to C-terminus: MKTFTAKPETVSRDWYVVDAEGKTLGRIATEIASRLRGKHKPEYTPHVDTGDYIIVINAEKVTVTGNKAAGKMYYSHSGFPGGIKEINFEKLQAHKPEMIIEKAVKGMLPKGPLGRAMFRKLKVYAGAEHNHAAQQPQVLDI.

This sequence belongs to the universal ribosomal protein uL13 family. Part of the 50S ribosomal subunit.

Functionally, this protein is one of the early assembly proteins of the 50S ribosomal subunit, although it is not seen to bind rRNA by itself. It is important during the early stages of 50S assembly. The protein is Large ribosomal subunit protein uL13 of Shewanella amazonensis (strain ATCC BAA-1098 / SB2B).